We begin with the raw amino-acid sequence, 396 residues long: Purine ribonucleoside efflux pump NepI (396 aa).

Residues 1-21 (MSEFIAENRGADAITRPNWSA) lie on the Cytoplasmic side of the membrane. A helical transmembrane segment spans residues 22–42 (VFSVAFCVACLIIVEFLPVSL). Topologically, residues 43-54 (LTPMAQDLGISE) are periplasmic. The helical transmembrane segment at 55 to 75 (GVAGQSVTVTAFVAMFASLFI) threads the bilayer. At 76–85 (TQTIQATDRR) the chain is on the cytoplasmic side. The chain crosses the membrane as a helical span at residues 86 to 106 (YVVILFAVLLTLSCLLVSFAN). Position 107 (serine 107) is a topological domain, periplasmic. Residues 108–128 (FSLLLIGRACLGLALGGFWAI) form a helical membrane-spanning segment. The Cytoplasmic segment spans residues 129–147 (SASLTMRLVPPRTVPKALS). The chain crosses the membrane as a helical span at residues 148–168 (VIFGAVSIALVIAAPLGGFLG). The Periplasmic portion of the chain corresponds to 169 to 175 (ELIGWRN). Residues 176 to 196 (VFNAAAAMGVLCIFWIIKSLP) form a helical membrane-spanning segment. Residues 197–215 (SLPGEPSHQKQNTFRLLQR) lie on the Cytoplasmic side of the membrane. Residues 216–236 (PGVMAGMIAIFMSFAGQFAFF) form a helical membrane-spanning segment. At 237–255 (TYIRPVYMNLAGFGVDGLT) the chain is on the periplasmic side. A helical membrane pass occupies residues 256–276 (LVLLSFGIASFVGTSLSSFIL). The Cytoplasmic segment spans residues 277 to 281 (KRSVK). The chain crosses the membrane as a helical span at residues 282-302 (LALAGAPFVLALSALVLTLWG). The Periplasmic segment spans residues 303–305 (SDK). A helical transmembrane segment spans residues 306 to 326 (IVATGVAIIWGLTFALIPVGW). Residues 327 to 343 (STWITRSLADQAEKAGS) lie on the Cytoplasmic side of the membrane. Residues 344 to 364 (IQVAVIQLANTCGAAIGGYAL) form a helical membrane-spanning segment. The Periplasmic segment spans residues 365–366 (DN). Residues 367–387 (IGLTSPLMLSGTLMLLTALLV) traverse the membrane as a helical segment. The Cytoplasmic segment spans residues 388–396 (TAKVKMKKS).

This sequence belongs to the major facilitator superfamily. DHA1 family. NepI (TC 2.A.1.2.26) subfamily.

It is found in the cell inner membrane. The enzyme catalyses inosine(in) + H(+)(out) = inosine(out) + H(+)(in). The catalysed reaction is guanosine(in) + H(+)(out) = guanosine(out) + H(+)(in). In terms of biological role, involved in the efflux of purine ribonucleosides, such as inosine and guanosine. This is Purine ribonucleoside efflux pump NepI from Escherichia coli O127:H6 (strain E2348/69 / EPEC).